A 370-amino-acid chain; its full sequence is Protein DUF642 L-GALACTONO-1,4-LACTONE-RESPONSIVE GENE 1 (370 aa).

The first 22 residues, 1-22 (MMYQEAALLLALLFISSNVVLS), serve as a signal peptide directing secretion. N-linked (GlcNAc...) asparagine glycosylation occurs at N124.

In terms of tissue distribution, expressed at low levels in roots, seedlings and leaves.

Its subcellular location is the secreted. It is found in the cell wall. This is Protein DUF642 L-GALACTONO-1,4-LACTONE-RESPONSIVE GENE 1 from Arabidopsis thaliana (Mouse-ear cress).